A 644-amino-acid chain; its full sequence is MPEPHAVLYVTNELSHIVKDGFLPIWKLTGDESLNDLWLENGKYATDVYAYGDVSKWTIRQLRGHGFIFISTHKNVQLADIIKTVDVRIPREVARSHDMKAFENEIGRRRIRMRKGFGDALRNYAFKMAIEFHGSEAETLNDANPRLHKIYGMPEIPPLYMEYAEIGTRFDDEPTDEKLVSMLDYIVYSAEEVHYIGCGDLRTLMQFKKRSPGRFRRVLWHVYDPIAPECSDPNVIVHNIMVDSKKDILKHMNFLKRVERLFIWDVSSDRSQMNDHEWETTRFAEDRLGEEIAYEMGGAFSSALIKHRIPNSKDEYHCISTYLFPQPGADADMYELRNFMRLRGYSHVDRHMHPDASVTKVVSRDVRKMVELYHGRDRGRFLKKRLFEHLHIVRKNGLLHESDEPRADLFYLTNRCNMGLEPSIYEVMKKSVIATAWVGRAPLYDYDDFALPRSTVMLNGSYRDIRILDGNGAILFLMWRYPDIVKKDLTYDPAWAMNFAVSLKEPIPDPPVPDISLCRFIGLRVESSVLRVRNPTLHETADELKRMGLDLSGHLYVTLMSGAYVTDLFWWFKMILDWSAQNREQKLRDLKRSAAEVIEWKEQMAERPWHVRNDLIAALREYKRKMGMREGASIDSWLELLRHL.

Belongs to the orbivirus VP4 family.

Its subcellular location is the virion. In terms of biological role, the VP4 protein is one of the five proteins (with VP1, VP3, VP6 and VP7) which form the inner capsid of the virus. The polypeptide is Core protein VP4 (Segment-4) (Antilocapra americana (Pronghorn)).